We begin with the raw amino-acid sequence, 384 residues long: Formate-dependent phosphoribosylglycinamide formyltransferase (384 aa).

N(1)-(5-phospho-beta-D-ribosyl)glycinamide contacts are provided by residues 14–15 (EL) and E74. ATP-binding positions include R106, K147, 152–157 (SSGKGQ), 187–190 (EEFI), and E195. Positions 111–300 (RLAAETLHLP…EFALHVRAVL (190 aa)) constitute an ATP-grasp domain. The Mg(2+) site is built by E259 and E271. N(1)-(5-phospho-beta-D-ribosyl)glycinamide-binding positions include D278, K348, and 355–356 (RR).

Belongs to the PurK/PurT family. In terms of assembly, homodimer.

It carries out the reaction N(1)-(5-phospho-beta-D-ribosyl)glycinamide + formate + ATP = N(2)-formyl-N(1)-(5-phospho-beta-D-ribosyl)glycinamide + ADP + phosphate + H(+). The protein operates within purine metabolism; IMP biosynthesis via de novo pathway; N(2)-formyl-N(1)-(5-phospho-D-ribosyl)glycinamide from N(1)-(5-phospho-D-ribosyl)glycinamide (formate route): step 1/1. Involved in the de novo purine biosynthesis. Catalyzes the transfer of formate to 5-phospho-ribosyl-glycinamide (GAR), producing 5-phospho-ribosyl-N-formylglycinamide (FGAR). Formate is provided by PurU via hydrolysis of 10-formyl-tetrahydrofolate. The sequence is that of Formate-dependent phosphoribosylglycinamide formyltransferase from Bacillus velezensis (strain DSM 23117 / BGSC 10A6 / LMG 26770 / FZB42) (Bacillus amyloliquefaciens subsp. plantarum).